Reading from the N-terminus, the 477-residue chain is UDP-glycosyltransferase 71K1 (477 aa).

Residues Ser285, 350–351 (WA), 368–376 (HCGWNSILE), and 390–393 (YAEQ) contribute to the UDP-alpha-D-glucose site.

This sequence belongs to the UDP-glycosyltransferase family.

Its function is as follows. Glycosyltransferase that possesses chalcone and flavonol 2'-O-glycosyltransferase activity. Converts phloretin to phlorizin (phloretin 2'-O-glucoside), a potent antioxidant. Possesses glycosyltransferase activity toward quercetin, isoliquiritigenin, butein and caffeic acid. The chain is UDP-glycosyltransferase 71K1 from Malus domestica (Apple).